The following is a 199-amino-acid chain: Pre T-cell antigen receptor alpha (199 aa).

The N-terminal stretch at 1–16 is a signal peptide; the sequence is MARTWLLLLLGVRCQA. Topologically, residues 17 to 146 are extracellular; the sequence is LPSGIAGTPF…PEPLGGTQRQ (130 aa). Cys-47 and Cys-107 are disulfide-bonded. Residues Asn-67 and Asn-117 are each glycosylated (N-linked (GlcNAc...) asparagine). The helical transmembrane segment at 147–167 threads the bilayer; that stretch reads VLWLSLLRLLLFKLLLLDVLL. The Cytoplasmic portion of the chain corresponds to 168–199; it reads TCSHLRLHVLAGQHLQPPPSRKSLPPTHRIWT.

In terms of assembly, heterodimer with TCRB; disulfide linked. This heterodimer assembles with CD3 proteins into a signaling-competent pre-T-cell receptor complex. Interacts with RHBDD1. Isoform 1 is expressed at higher levels than isoform 2 in the thymus while only isoform 2 is expressed in polyclonal beta-only cells. Isoform 1 shows a predominant expression in immature thymocytes.

The protein localises to the membrane. Its subcellular location is the cell membrane. Its function is as follows. Component of the pre-T-cell receptor complex (composed of PTCRA, TCRB and the CD3 complex) that plays a crucial role in early T-cell development, particularly alpha-beta T cell differentiation. Isoform 1 acts to retain most TCRB intracellularly, while isoform 2 permits higher levels of cell surface TCRB expression and facilitates signaling from the CD3-TCRB complex. This Mus musculus (Mouse) protein is Pre T-cell antigen receptor alpha.